The following is a 207-amino-acid chain: Ribosomal RNA small subunit methyltransferase G (207 aa).

S-adenosyl-L-methionine contacts are provided by residues Gly-73, Leu-78, 124–125, and Arg-139; that span reads VE.

It belongs to the methyltransferase superfamily. RNA methyltransferase RsmG family.

Its subcellular location is the cytoplasm. It carries out the reaction guanosine(527) in 16S rRNA + S-adenosyl-L-methionine = N(7)-methylguanosine(527) in 16S rRNA + S-adenosyl-L-homocysteine. In terms of biological role, specifically methylates the N7 position of guanine in position 527 of 16S rRNA. This Escherichia coli O1:K1 / APEC protein is Ribosomal RNA small subunit methyltransferase G.